Here is a 469-residue protein sequence, read N- to C-terminus: UDP-N-acetylmuramate--L-alanine ligase (469 aa).

Position 113 to 119 (Gly-113 to Thr-119) interacts with ATP.

It belongs to the MurCDEF family.

It localises to the cytoplasm. It carries out the reaction UDP-N-acetyl-alpha-D-muramate + L-alanine + ATP = UDP-N-acetyl-alpha-D-muramoyl-L-alanine + ADP + phosphate + H(+). It functions in the pathway cell wall biogenesis; peptidoglycan biosynthesis. Functionally, cell wall formation. This Syntrophobacter fumaroxidans (strain DSM 10017 / MPOB) protein is UDP-N-acetylmuramate--L-alanine ligase.